The sequence spans 155 residues: Small ribosomal subunit protein uS7c (155 aa).

This sequence belongs to the universal ribosomal protein uS7 family. As to quaternary structure, part of the 30S ribosomal subunit.

Its subcellular location is the plastid. It is found in the chloroplast. Functionally, one of the primary rRNA binding proteins, it binds directly to 16S rRNA where it nucleates assembly of the head domain of the 30S subunit. This is Small ribosomal subunit protein uS7c (rps7) from Pinus thunbergii (Japanese black pine).